The sequence spans 92 residues: MDIKLINIGFGNIVSANRLVAIVSPESAPIKRIIQEARDRGMLIDATYGRRTRAVIITDSDHVILSAVQPETVAHRLSTKDDGTNTVDEVEE.

The protein belongs to the RemA family.

The sequence is that of Putative regulatory protein CA_C1717 from Clostridium acetobutylicum (strain ATCC 824 / DSM 792 / JCM 1419 / IAM 19013 / LMG 5710 / NBRC 13948 / NRRL B-527 / VKM B-1787 / 2291 / W).